Here is a 309-residue protein sequence, read N- to C-terminus: Virulence regulon transcriptional activator VirB (309 aa).

A DNA-binding region (H-T-H motif) is located at residues 152 to 171 (KDIAKKENLSRAKVTRAFQA).

It belongs to the ParB family.

Its function is as follows. Transcription activator for the invasion antigens IpaB, IpaC and IpaD. VirB is itself regulated by VirF. The sequence is that of Virulence regulon transcriptional activator VirB (virB) from Shigella flexneri.